Reading from the N-terminus, the 184-residue chain is Thymidine kinase (184 aa).

ATP is bound by residues 10–17 (GPMYSGKT), histidine 53, and 83–86 (DEVQ). Glutamate 84 functions as the Proton acceptor in the catalytic mechanism. Histidine 115 serves as a coordination point for substrate. Residues cysteine 140 and cysteine 143 each contribute to the Zn(2+) site. Residues 161 to 164 (IDVG) and tyrosine 169 contribute to the substrate site. Zn(2+)-binding residues include cysteine 173 and cysteine 176.

This sequence belongs to the thymidine kinase family. As to quaternary structure, homotetramer.

The protein resides in the cytoplasm. The catalysed reaction is thymidine + ATP = dTMP + ADP + H(+). The sequence is that of Thymidine kinase (tdk) from Thermotoga maritima (strain ATCC 43589 / DSM 3109 / JCM 10099 / NBRC 100826 / MSB8).